A 254-amino-acid chain; its full sequence is K88 minor fimbrial subunit FaeI (254 aa).

The signal sequence occupies residues 1–20 (MKKVTLFLFVVSLLPSTVLA).

Belongs to the fimbrial K88 protein family.

It localises to the fimbrium. Functionally, K88 minor fimbrial subunit, plays an essential role in the biogenesis of the K88 fimbriae. Fimbriae (also called pili), are polar filaments radiating from the surface of the bacterium to a length of 0.5-1.5 micrometers and numbering 100-300 per cell. They enable bacteria to colonize the epithelium of specific host organs. This is K88 minor fimbrial subunit FaeI (faeI) from Escherichia coli.